We begin with the raw amino-acid sequence, 474 residues long: Semenogelin-2 (474 aa).

The signal sequence occupies residues 1 to 23 (MKSIILFVLSLLLILEKQAAVMG). 5 disordered regions span residues 24 to 62 (QKGG…SKGS), 132 to 158 (GGQA…LSSQ), 173 to 194 (KEQA…QSSY), 226 to 247 (VREE…DRLQ), and 272 to 474 (NLNQ…SSTE). Polar residues-rich tracts occupy residues 31–40 (QLPSGSSQFP), 137–158 (RGTQ…LSSQ), and 174–194 (EQAS…QSSY). Over residues 292–310 (RTEERQLNHGEKSVQKDVS) the composition is skewed to basic and acidic residues. The segment covering 325–334 (KSQNQVTIHS) has biased composition (polar residues). The span at 335-346 (QDQEHGHKENKM) shows a compositional bias: basic and acidic residues. Positions 372–397 (GSISIQTEEQIHGKSQNQVRIPSQAQ) are enriched in polar residues. Over residues 399 to 426 (YGHKENKISYRSSSTEERRLNSGEKDVQ) the composition is skewed to basic and acidic residues. The span at 445 to 455 (KSQNQVTIPSQ) shows a compositional bias: polar residues. A compositionally biased stretch (basic and acidic residues) spans 456 to 465 (DQEHGHKENK).

The protein belongs to the semenogelin family. In terms of assembly, interacts with SERPINA5.

Its subcellular location is the secreted. In terms of biological role, participates in the formation of a gel matrix (sperm coagulum) entrapping the accessory gland secretions and ejaculated spermatozoa. The chain is Semenogelin-2 (SEMG2) from Gorilla gorilla gorilla (Western lowland gorilla).